The following is a 416-amino-acid chain: Serine hydroxymethyltransferase (416 aa).

Residues leucine 121 and 125 to 127 (GHL) each bind (6S)-5,6,7,8-tetrahydrofolate. The residue at position 229 (lysine 229) is an N6-(pyridoxal phosphate)lysine.

The protein belongs to the SHMT family. In terms of assembly, homodimer. Pyridoxal 5'-phosphate is required as a cofactor.

It is found in the cytoplasm. It carries out the reaction (6R)-5,10-methylene-5,6,7,8-tetrahydrofolate + glycine + H2O = (6S)-5,6,7,8-tetrahydrofolate + L-serine. The protein operates within one-carbon metabolism; tetrahydrofolate interconversion. It participates in amino-acid biosynthesis; glycine biosynthesis; glycine from L-serine: step 1/1. Its function is as follows. Catalyzes the reversible interconversion of serine and glycine with tetrahydrofolate (THF) serving as the one-carbon carrier. This reaction serves as the major source of one-carbon groups required for the biosynthesis of purines, thymidylate, methionine, and other important biomolecules. Also exhibits THF-independent aldolase activity toward beta-hydroxyamino acids, producing glycine and aldehydes, via a retro-aldol mechanism. This is Serine hydroxymethyltransferase from Neisseria meningitidis serogroup B (strain ATCC BAA-335 / MC58).